The primary structure comprises 262 residues: Sulfite reductase, dissimilatory-type subunit beta (262 aa).

Cys-151, Cys-188, Cys-189, Cys-193, Cys-231, Cys-258, and Cys-261 together coordinate [4Fe-4S] cluster. Residue Cys-193 participates in siroheme binding.

As to quaternary structure, heterohexamer of two alpha, two beta and two gamma subunits. Requires [4Fe-4S] cluster as cofactor. Siroheme serves as cofactor.

It catalyses the reaction [DsrC protein]-trisulfide + NAD(+) + 3 H2O = [DsrC protein]-dithiol + sulfite + NADH + 3 H(+). In terms of biological role, catalyzes the reduction of sulfite to sulfide. This is the terminal oxidation reaction in sulfate respiration, a process catalyzed by the sulfate-reducing bacteria. The sequence is that of Sulfite reductase, dissimilatory-type subunit beta (dsrB) from Megalodesulfovibrio gigas (strain ATCC 19364 / DSM 1382 / NCIMB 9332 / VKM B-1759) (Desulfovibrio gigas).